We begin with the raw amino-acid sequence, 28 residues long: Humanin-like 2 (28 aa).

It belongs to the humanin family. In terms of tissue distribution, highly expressed in testis. Also expressed in kidney, heart, skeletal muscles and brain.

It localises to the secreted. It is found in the cytoplasm. In terms of biological role, plays a role as a neuroprotective and antiapoptotic factor. This chain is Humanin-like 2, found in Homo sapiens (Human).